The sequence spans 152 residues: Ribosome maturation factor RimP (152 aa).

The protein belongs to the RimP family.

It is found in the cytoplasm. In terms of biological role, required for maturation of 30S ribosomal subunits. The protein is Ribosome maturation factor RimP of Pseudomonas aeruginosa (strain LESB58).